Consider the following 84-residue polypeptide: Small ribosomal subunit protein bS20 (84 aa).

The protein belongs to the bacterial ribosomal protein bS20 family.

Binds directly to 16S ribosomal RNA. This Parabacteroides distasonis (strain ATCC 8503 / DSM 20701 / CIP 104284 / JCM 5825 / NCTC 11152) protein is Small ribosomal subunit protein bS20.